The following is an 804-amino-acid chain: Enhancer of polycomb homolog 2 (804 aa).

Disordered regions lie at residues 372-395 (QSSD…ENDP), 484-508 (GFSS…DRHC), 603-624 (QSQQ…SDCM), and 646-669 (PVRS…VQPS). Composition is skewed to polar residues over residues 611 to 624 (SHPK…SDCM) and 654 to 669 (DQNA…VQPS).

Belongs to the enhancer of polycomb family.

The protein localises to the nucleus. Its function is as follows. May play a role in transcription or DNA repair. The polypeptide is Enhancer of polycomb homolog 2 (epc2) (Xenopus laevis (African clawed frog)).